The sequence spans 66 residues: Sarcoplasmic/endoplasmic reticulum calcium ATPase regulator ARLN (66 aa).

Met-1 is modified (N-acetylmethionine). The tract at residues 1 to 37 is disordered; that stretch reads MEVDAPGVDGRDGLRERRGFSEGGRQNFDVRPQSGAN. Basic and acidic residues predominate over residues 9–20; the sequence is DGRDGLRERRGF. A helical transmembrane segment spans residues 45–65; sequence WLDLWLFILFDVVVFLFVYFL.

As to quaternary structure, homooligomer. Can also form heterooligomers with other sarcoplasmic/endoplasmic reticulum calcium ATPase (SERCA) regulators ERLN, PLN, SLN and STRIT1/DWORF. Monomer. Interacts as a monomer with ATP2A2/SERCA2; the interaction results in inhibition of ATP2A2 Ca(2+) affinity.

Its subcellular location is the endoplasmic reticulum membrane. Inhibits the activity of the calcium ATPases ATP2A2/SERCA2 and ATP2A3/SERCA3 by decreasing their apparent affinity for Ca(2+). The sequence is that of Sarcoplasmic/endoplasmic reticulum calcium ATPase regulator ARLN from Homo sapiens (Human).